A 426-amino-acid polypeptide reads, in one-letter code: Glutamate-1-semialdehyde 2,1-aminomutase (426 aa).

Position 265 is an N6-(pyridoxal phosphate)lysine (K265).

This sequence belongs to the class-III pyridoxal-phosphate-dependent aminotransferase family. HemL subfamily. In terms of assembly, homodimer. Pyridoxal 5'-phosphate serves as cofactor.

It is found in the cytoplasm. The enzyme catalyses (S)-4-amino-5-oxopentanoate = 5-aminolevulinate. The protein operates within porphyrin-containing compound metabolism; protoporphyrin-IX biosynthesis; 5-aminolevulinate from L-glutamyl-tRNA(Glu): step 2/2. This chain is Glutamate-1-semialdehyde 2,1-aminomutase, found in Akkermansia muciniphila (strain ATCC BAA-835 / DSM 22959 / JCM 33894 / BCRC 81048 / CCUG 64013 / CIP 107961 / Muc).